An 802-amino-acid polypeptide reads, in one-letter code: E3 ubiquitin-protein ligase RNF10 (802 aa).

Low complexity-rich tracts occupy residues 1–31 (MPQS…SGSS), 78–90 (SNQS…QKSK), and 104–113 (SKPFSSSSNG). The segment at 1-134 (MPQSSPSTAA…AEFSPAQFSG (134 aa)) is disordered. Phosphoserine is present on serine 5. Serine 110 carries the phosphoserine modification. Residues 114–124 (GRRDEVAEAQR) show a composition bias toward basic and acidic residues. Serine 128 carries the phosphoserine modification. The RING-type zinc-finger motif lies at 225–267 (CPICLYPPTAAKITRCGHIFCWACILHYLSLSERTWSKCPICY). The segment covering 645–654 (DSALGPTSTE) has biased composition (polar residues). Disordered stretches follow at residues 645-664 (DSAL…LSPL), 716-753 (DGWP…VPSF), and 767-802 (KLDT…VHTK). The segment covering 716 to 728 (DGWPKAAPKKDDN) has biased composition (basic and acidic residues). Positions 793–802 (LFSTSVVHTK) are enriched in polar residues.

The protein belongs to the RNF10 family. In terms of assembly, interacts with MEOX2.

It localises to the cytoplasm. Its subcellular location is the nucleus. It catalyses the reaction S-ubiquitinyl-[E2 ubiquitin-conjugating enzyme]-L-cysteine + [acceptor protein]-L-lysine = [E2 ubiquitin-conjugating enzyme]-L-cysteine + N(6)-ubiquitinyl-[acceptor protein]-L-lysine.. It participates in protein modification; protein ubiquitination. Functionally, E3 ubiquitin-protein ligase that catalyzes monoubiquitination of 40S ribosomal proteins RPS2/us5 and RPS3/us3 in response to ribosome stalling. Part of a ribosome quality control that takes place when ribosomes have stalled during translation initiation (iRQC): RNF10 acts by mediating monoubiquitination of RPS2/us5 and RPS3/us3, promoting their degradation by the proteasome. Also promotes ubiquitination of 40S ribosomal proteins in response to ribosome stalling during translation elongation. The action of RNF10 in iRQC is counteracted by USP10. May also act as a transcriptional factor involved in the regulation of MAG (Myelin-associated glycoprotein) expression. Acts as a regulator of Schwann cell differentiation and myelination. In Rattus norvegicus (Rat), this protein is E3 ubiquitin-protein ligase RNF10.